We begin with the raw amino-acid sequence, 247 residues long: uncharacterized protein (247 aa).

The N-terminal stretch at Met-1–Ser-35 is a signal peptide. N-linked (GlcNAc...) asparagine glycosylation is present at Asn-57. A helical membrane pass occupies residues Leu-82–Ile-102. The tract at residues Tyr-109–Ser-179 is disordered. Gly residues predominate over residues Ser-160–Arg-172.

Its subcellular location is the membrane. This is an uncharacterized protein from Homo sapiens (Human).